The primary structure comprises 249 residues: Chitooligosaccharide deacetylase (249 aa).

Mg(2+) contacts are provided by His61 and His125.

It belongs to the YdjC deacetylase family. ChbG subfamily. In terms of assembly, homodimer. Requires Mg(2+) as cofactor.

The protein resides in the cytoplasm. It carries out the reaction N,N'-diacetylchitobiose + H2O = N-acetyl-beta-D-glucosaminyl-(1-&gt;4)-D-glucosamine + acetate. The enzyme catalyses diacetylchitobiose-6'-phosphate + H2O = N'-monoacetylchitobiose-6'-phosphate + acetate. Its pathway is glycan degradation; chitin degradation. In terms of biological role, involved in the degradation of chitin. ChbG is essential for growth on the acetylated chitooligosaccharides chitobiose and chitotriose but is dispensable for growth on cellobiose and chitosan dimer, the deacetylated form of chitobiose. Deacetylation of chitobiose-6-P and chitotriose-6-P is necessary for both the activation of the chb promoter by the regulatory protein ChbR and the hydrolysis of phosphorylated beta-glucosides by the phospho-beta-glucosidase ChbF. Catalyzes the removal of only one acetyl group from chitobiose-6-P to yield monoacetylchitobiose-6-P, the inducer of ChbR and the substrate of ChbF. The polypeptide is Chitooligosaccharide deacetylase (Escherichia coli O17:K52:H18 (strain UMN026 / ExPEC)).